A 123-amino-acid chain; its full sequence is Small ribosomal subunit protein uS12 (123 aa).

Residues 1–24 form a disordered region; sequence MPTINQLVRKGRTPQKVKSKVPAM. Residues 9 to 19 are compositionally biased toward basic residues; that stretch reads RKGRTPQKVKS. D89 carries the post-translational modification 3-methylthioaspartic acid.

This sequence belongs to the universal ribosomal protein uS12 family. As to quaternary structure, part of the 30S ribosomal subunit. Contacts proteins S8 and S17. May interact with IF1 in the 30S initiation complex.

With S4 and S5 plays an important role in translational accuracy. Its function is as follows. Interacts with and stabilizes bases of the 16S rRNA that are involved in tRNA selection in the A site and with the mRNA backbone. Located at the interface of the 30S and 50S subunits, it traverses the body of the 30S subunit contacting proteins on the other side and probably holding the rRNA structure together. The combined cluster of proteins S8, S12 and S17 appears to hold together the shoulder and platform of the 30S subunit. The polypeptide is Small ribosomal subunit protein uS12 (Sphingopyxis alaskensis (strain DSM 13593 / LMG 18877 / RB2256) (Sphingomonas alaskensis)).